A 716-amino-acid polypeptide reads, in one-letter code: Zinc finger protein on ecdysone puffs (716 aa).

Disordered regions lie at residues 103–168 (PSLL…GGIR) and 182–208 (KNAN…ESPY). Residues 188 to 203 (KKKEPTPGEKKIESPT) are compositionally biased toward basic and acidic residues. The residue at position 201 (Ser-201) is a Phosphoserine. Thr-203 carries the post-translational modification Phosphothreonine. Ser-206 is modified (phosphoserine). The segment at 216–240 (FYCHLCKKHMWDANSFENHIKGRTH) adopts a C2H2-type 1 zinc-finger fold. The C2H2-type 2; atypical zinc-finger motif lies at 288 to 310 (DYCTMCDLNFHGHISTHRKSEGH). A C2H2-type 3 zinc finger spans residues 319–343 (PKCIECNKEFATRIDYDTHLLSAEH). Over residues 350–359 (NNTKVGERKR) the composition is skewed to basic and acidic residues. Positions 350–447 (NNTKVGERKR…EEEEVALPVD (98 aa)) are disordered. The Nuclear localization signal signature appears at 379–383 (KRKKK). A compositionally biased stretch (basic and acidic residues) spans 386-401 (KKEGEAADGEAKKEGA). The span at 405–414 (EGAEGDEAEG) shows a compositional bias: acidic residues. Basic and acidic residues predominate over residues 415–431 (EEAKEGEEAADETKEGD). The span at 432–447 (ELNESQEEEEVALPVD) shows a compositional bias: acidic residues. A C2H2-type 4 zinc finger spans residues 489 to 513 (YECSVCSKFFDTEVTAEIHSRTATH). A disordered region spans residues 534–716 (RAAAALEENE…QRARGRYNRY (183 aa)). Over residues 541–551 (ENERKKRKVEE) the composition is skewed to basic and acidic residues. Residues 544–548 (RKKRK) carry the Nuclear localization signal motif. Acidic residues predominate over residues 560-638 (AAEETTEGAE…GQEGEQEPEP (79 aa)). A compositionally biased stretch (pro residues) spans 639–656 (EPAPVQTPAPAEPAPPAK). A compositionally biased stretch (low complexity) spans 657–704 (TPAKTPTKAAAPAAVASPAAAATSADASPSPAKKATPARAAAGAKATP). Phosphoserine occurs at positions 673, 684, and 686. At Thr-692 the chain carries Phosphothreonine. Positions 707–716 (QRARGRYNRY) are enriched in basic residues.

It localises to the nucleus. It is found in the chromosome. May play a role in the process of early and late gene activation, or possibly in RNA processing, for a defined set of developmentally regulated loci. This chain is Zinc finger protein on ecdysone puffs (Pep), found in Drosophila melanogaster (Fruit fly).